The sequence spans 320 residues: Protein U25 (320 aa).

Belongs to the herpesviridae US22 family.

The protein is Protein U25 (U25) of Human herpesvirus 7 (strain JI) (HHV-7).